The sequence spans 256 residues: MLEFYGKRFESRLLLGTAQYPSPSILADAVRASLSRTVTVSLRRESGEARAGQDFWALIKALGVAVLPNTAGCHTPREAITTAHMAREVFGTNWIKLEVIGDTDTLQPDPFGLVEAARILCDEGFEVFPYMNDDLIVAERLIEAGCKVLMPWGAPIGSGRGLNNPYALKTMRAHFPDIPLVVDAGIGVPSHAAAAMELGFDAVLINTAVAKAGDPAAMARAFALAVEAGRLAYEADPIEARDMASPSTPLLGKAFL.

Lysine 96 acts as the Schiff-base intermediate with DXP in catalysis. Residues glycine 157, alanine 184 to glycine 185, and asparagine 206 to threonine 207 contribute to the 1-deoxy-D-xylulose 5-phosphate site.

Belongs to the ThiG family. In terms of assembly, homotetramer. Forms heterodimers with either ThiH or ThiS.

The protein resides in the cytoplasm. It catalyses the reaction [ThiS sulfur-carrier protein]-C-terminal-Gly-aminoethanethioate + 2-iminoacetate + 1-deoxy-D-xylulose 5-phosphate = [ThiS sulfur-carrier protein]-C-terminal Gly-Gly + 2-[(2R,5Z)-2-carboxy-4-methylthiazol-5(2H)-ylidene]ethyl phosphate + 2 H2O + H(+). Its pathway is cofactor biosynthesis; thiamine diphosphate biosynthesis. Catalyzes the rearrangement of 1-deoxy-D-xylulose 5-phosphate (DXP) to produce the thiazole phosphate moiety of thiamine. Sulfur is provided by the thiocarboxylate moiety of the carrier protein ThiS. In vitro, sulfur can be provided by H(2)S. The chain is Thiazole synthase from Brucella suis (strain ATCC 23445 / NCTC 10510).